A 410-amino-acid polypeptide reads, in one-letter code: MTEETHPDDDSYIVRVKAVVMTRDDSSGGWFPQEGGGISRVGVCKVMHPEGNGRSGFLIHGERQKDKLVVLECYVRKDLVYTKANPTFHHWKVDNRKFGLTFQSPADARAFDRGVRKAIEDLIEGSTTSSSTIHNEAELGDDDVFTTATDSSSNSSQKREPNTRTISSPTSCEHRRIYTLDPYPMDLYHPDQRLPRSYPQVTFPEDDEEIVRINPREKIWMTGYEDYRHAPVRGKYLDSTEDADSYVRFAKGEVPKHEYTYPYVDSSDFGFGEDPKGNVIKTQPPRAKSRRRKENGERSRCVYCRDMFNHEENRRGHCQDAPDAVRTCIRRVSCMWCADSMLYHCMSDPEGDYTDPCSCDTSDEKFCLRWMALIALSFLAPCMCCYLPLRACHHCGVMCRCCGGKHKAAA.

The WH1 domain occupies 5 to 122 (THPDDDSYIV…RGVRKAIEDL (118 aa)). A disordered region spans residues 127–171 (TTSSSTIHNEAELGDDDVFTTATDSSSNSSQKREPNTRTISSPTS). A compositionally biased stretch (polar residues) spans 146-156 (TTATDSSSNSS). The region spanning 197 to 252 (SYPQVTFPEDDEEIVRINPREKIWMTGYEDYRHAPVRGKYLDSTEDADSYVRFAKG) is the KBD domain. Residues tyrosine 224 and tyrosine 227 each carry the phosphotyrosine modification. Residues 274-294 (DPKGNVIKTQPPRAKSRRRKE) form a disordered region. Positions 300 to 408 (RCVYCRDMFN…CRCCGGKHKA (109 aa)) constitute an SPR domain.

In terms of assembly, homodimer and heterodimer. Able to interact with SPRED1 to form heterodimers. Interacts with RAS. May interact with ZDHHC13 (via ANK repeats) and ZDHHC17 (via ANK repeats). Interacts with TESK1. Interacts with NF1. Post-translationally, phosphorylated on serine and threonine residues. Phosphorylated on tyrosine. Phosphorylation of Tyr-224 and Tyr-227 are required for ubiquitination. In terms of processing, ubiquitinated; leading to degradation by the proteasome. In terms of tissue distribution, expressed in the eye, with higher expression in lens epithelium than in lens fiber cells at postnatal day 15.

The protein localises to the cell membrane. Its subcellular location is the cytoplasmic vesicle. It is found in the secretory vesicle membrane. The protein resides in the cytoplasm. Its function is as follows. Negatively regulates Ras signaling pathways and downstream activation of MAP kinases. Recruits and translocates NF1 to the cell membrane, thereby enabling NF1-dependent hydrolysis of active GTP-bound Ras to inactive GDP-bound Ras. Inhibits fibroblast growth factor (FGF)-induced retinal lens fiber differentiation, probably by inhibiting FGF-mediated phosphorylation of ERK1/2. Inhibits TGFB-induced epithelial-to-mesenchymal transition in lens epithelial cells. This chain is Sprouty-related, EVH1 domain-containing protein 2 (Spred2), found in Rattus norvegicus (Rat).